The sequence spans 125 residues: MKVVCIILLFGIAAANVSATNKAGSSKNAKDTEGKKEILRFPRFIPNPKELATKLLDICKEHEKDSPSSYTAINDKHLDFKNCTFLCKHGPHKNVTLALPEETPCGPSGQTCADKSKCVGHIPGC.

Residues 1–15 (MKVVCIILLFGIAAA) form the signal peptide. Asn-82 and Asn-94 each carry an N-linked (GlcNAc...) asparagine glycan. The CD4-binding stretch occupies residues 106–125 (GPSGQTCADKSKCVGHIPGC).

It belongs to the salp15 family. Interacts with host CD4. Interacts with host DC-SIGN (CD209). Interacts with Borrelia outer surface protein C (OspC). Expressed in salivary glands.

It localises to the secreted. Functionally, salivary tick protein that downregulates host immune system by binding to both dendritic cells, and CD4(+) T cells. Specifically binds to the CD4 coreceptor on T cells. This interaction prevents the activation of the Src kinase, Lck, and its downstream substrate Zap-70, and results in deficient activation of PLCgamma1, the repression of calcium fluxes triggered by T-cell antigen receptor (TCR) ligation, and a subsequent reduction in interleukin-2 production. This salivary protein also binds to DC-SIGN (CD209) on dendritic cells (DC) and activates the Raf-1 kinase/MEK signaling pathway that results in down-regulating expression of pro-inflammatory cytokines. Furthermore, it inhibits T cell proliferation induced by DCs. It also inhibits in vitro keratinocyte inflammation induced by Borrelia burgdorferi or by the major outer surface protein (OspC) of Borrelia. In addition, it downregulates chemokines and monocyte chemoattractant protein 1, as well as several antimicrobial peptides such as defensins, cathelicidin, psoriasin, and RNase 7. Apart from its immunomodulatory activities, it is also associated with protection of Borrelia spirochetes from antibody-mediated killing through its binding to OspC. In vivo, tests on different immune disease animal models show promising therapeutic results, e.g., in inhibiting HIV infection, experimental autoimmune encephalomyelitis, transplantation rejection, and asthma. This Ixodes pacificus (Western black-legged tick) protein is Salivary protein 15 Ipac-1.